A 127-amino-acid chain; its full sequence is S-adenosylmethionine decarboxylase proenzyme 2 (127 aa).

S63 acts as the Schiff-base intermediate with substrate; via pyruvic acid in catalysis. S63 carries the pyruvic acid (Ser); by autocatalysis modification. H68 acts as the Proton acceptor; for processing activity in catalysis. The active-site Proton donor; for catalytic activity is the C83.

It belongs to the prokaryotic AdoMetDC family. Type 1 subfamily. Heterotetramer of two alpha and two beta chains arranged as a dimer of alpha/beta heterodimers. The cofactor is pyruvate. Post-translationally, is synthesized initially as an inactive proenzyme. Formation of the active enzyme involves a self-maturation process in which the active site pyruvoyl group is generated from an internal serine residue via an autocatalytic post-translational modification. Two non-identical subunits are generated from the proenzyme in this reaction, and the pyruvate is formed at the N-terminus of the alpha chain, which is derived from the carboxyl end of the proenzyme. The post-translation cleavage follows an unusual pathway, termed non-hydrolytic serinolysis, in which the side chain hydroxyl group of the serine supplies its oxygen atom to form the C-terminus of the beta chain, while the remainder of the serine residue undergoes an oxidative deamination to produce ammonia and the pyruvoyl group blocking the N-terminus of the alpha chain.

It catalyses the reaction S-adenosyl-L-methionine + H(+) = S-adenosyl 3-(methylsulfanyl)propylamine + CO2. The protein operates within amine and polyamine biosynthesis; S-adenosylmethioninamine biosynthesis; S-adenosylmethioninamine from S-adenosyl-L-methionine: step 1/1. Its function is as follows. Catalyzes the decarboxylation of S-adenosylmethionine to S-adenosylmethioninamine (dcAdoMet), the propylamine donor required for the synthesis of the polyamines spermine and spermidine from the diamine putrescine. The chain is S-adenosylmethionine decarboxylase proenzyme 2 from Halalkalibacterium halodurans (strain ATCC BAA-125 / DSM 18197 / FERM 7344 / JCM 9153 / C-125) (Bacillus halodurans).